Here is a 336-residue protein sequence, read N- to C-terminus: HTH-type transcriptional repressor PurR (336 aa).

Residues 2 to 56 (ATIKDVAKLAGVSTTTVSHVINKTRFVAEDTSKAVWDAIQQLNYSPSAVARSLKV) form the HTH lacI-type domain. The segment at residues 4–23 (IKDVAKLAGVSTTTVSHVIN) is a DNA-binding region (H-T-H motif). The DNA-binding element occupies 48-56 (SAVARSLKV). Hypoxanthine is bound by residues tyrosine 73, lysine 188, phenylalanine 219, and aspartate 273.

As to quaternary structure, homodimer.

It participates in purine metabolism; purine nucleotide biosynthesis [regulation]. Is the main repressor of the genes involved in the de novo synthesis of purine nucleotides, regulating purB, purC, purEK, purF, purHD, purL, purMN and guaBA expression. PurR is allosterically activated to bind its cognate DNA by binding the purine corepressors, hypoxanthine or guanine, thereby effecting transcription repression. The chain is HTH-type transcriptional repressor PurR from Actinobacillus pleuropneumoniae serotype 3 (strain JL03).